Reading from the N-terminus, the 304-residue chain is Porphobilinogen deaminase (304 aa).

Residue Cys240 is modified to S-(dipyrrolylmethanemethyl)cysteine.

This sequence belongs to the HMBS family. Monomer. The cofactor is dipyrromethane.

The enzyme catalyses 4 porphobilinogen + H2O = hydroxymethylbilane + 4 NH4(+). The protein operates within porphyrin-containing compound metabolism; protoporphyrin-IX biosynthesis; coproporphyrinogen-III from 5-aminolevulinate: step 2/4. Its function is as follows. Tetrapolymerization of the monopyrrole PBG into the hydroxymethylbilane pre-uroporphyrinogen in several discrete steps. This is Porphobilinogen deaminase from Xanthomonas campestris pv. campestris (strain ATCC 33913 / DSM 3586 / NCPPB 528 / LMG 568 / P 25).